Here is a 169-residue protein sequence, read N- to C-terminus: Gastrula zinc finger protein XlCGF62.1 (169 aa).

6 C2H2-type zinc fingers span residues 6-28 (FICT…IRTH), 34-56 (FICT…YKTH), 62-84 (FICT…HRSH), 90-113 (FTCT…QAIH), 119-141 (FICT…KRTH), and 147-169 (FVCT…KRTH).

It belongs to the krueppel C2H2-type zinc-finger protein family.

It localises to the nucleus. In terms of biological role, may be involved in transcriptional regulation. The sequence is that of Gastrula zinc finger protein XlCGF62.1 from Xenopus laevis (African clawed frog).